The sequence spans 756 residues: Ribonucleoside-diphosphate reductase subunit alpha (756 aa).

Residues 5-95 (LMVTKRDGTQ…IFHLRKKAYG (91 aa)) form the ATP-cone domain. ATP is bound by residues Lys9, 15–21 (EQINLDK), Thr55, and Lys91. GDP is bound at residue Thr209. Cysteines 225 and 462 form a disulfide. DTTP is bound by residues 232-234 (DSL), Arg262, and Arg269. GDP is bound at residue Asn437. Residue Asn437 is the Proton acceptor of the active site. The active-site Cysteine radical intermediate is the Cys439. GDP-binding positions include Glu441 and 623 to 625 (ETS). Catalysis depends on Glu441, which acts as the Proton acceptor.

Belongs to the ribonucleoside diphosphate reductase large chain family. In terms of assembly, tetramer of two alpha and two beta subunits.

The enzyme catalyses a 2'-deoxyribonucleoside 5'-diphosphate + [thioredoxin]-disulfide + H2O = a ribonucleoside 5'-diphosphate + [thioredoxin]-dithiol. With respect to regulation, under complex allosteric control mediated by deoxynucleoside triphosphates and ATP binding to separate specificity and activation sites on the alpha subunit. The type of nucleotide bound at the specificity site determines substrate preference. It seems probable that ATP makes the enzyme reduce CDP and UDP, dGTP favors ADP reduction and dTTP favors GDP reduction. Stimulated by ATP and inhibited by dATP binding to the activity site. Provides the precursors necessary for DNA synthesis. Catalyzes the biosynthesis of deoxyribonucleotides from the corresponding ribonucleotides. The protein is Ribonucleoside-diphosphate reductase subunit alpha (nrdA) of Haemophilus influenzae (strain ATCC 51907 / DSM 11121 / KW20 / Rd).